Consider the following 223-residue polypeptide: PKHD-type hydroxylase syc1482_d (223 aa).

The Fe2OG dioxygenase domain occupies 78–176 (RVHSLLFSRY…RFACVGWVQS (99 aa)). Histidine 96, aspartate 98, and histidine 157 together coordinate Fe cation. Arginine 167 lines the 2-oxoglutarate pocket.

Fe(2+) serves as cofactor. Requires L-ascorbate as cofactor.

The protein is PKHD-type hydroxylase syc1482_d of Synechococcus sp. (strain ATCC 27144 / PCC 6301 / SAUG 1402/1) (Anacystis nidulans).